Here is a 227-residue protein sequence, read N- to C-terminus: Ribosomal RNA large subunit methyltransferase E (227 aa).

Residues Gly-78, Trp-80, Asp-103, Asp-119, and Asp-143 each contribute to the S-adenosyl-L-methionine site. The Proton acceptor role is filled by Lys-183.

This sequence belongs to the class I-like SAM-binding methyltransferase superfamily. RNA methyltransferase RlmE family.

The protein resides in the cytoplasm. The catalysed reaction is uridine(2552) in 23S rRNA + S-adenosyl-L-methionine = 2'-O-methyluridine(2552) in 23S rRNA + S-adenosyl-L-homocysteine + H(+). Functionally, specifically methylates the uridine in position 2552 of 23S rRNA at the 2'-O position of the ribose in the fully assembled 50S ribosomal subunit. This Rickettsia akari (strain Hartford) protein is Ribosomal RNA large subunit methyltransferase E.